We begin with the raw amino-acid sequence, 95 residues long: Trypomastigote decay-accelerating factor (95 aa).

Belongs to the receptors of complement activation (RCA) family.

Its function is as follows. Interferes with the efficient assembly of the host C3 convertase. Could protect parasites from complement-mediated lysis by sera from a number of different species. The polypeptide is Trypomastigote decay-accelerating factor (Trypanosoma cruzi).